A 159-amino-acid chain; its full sequence is Protein Smg homolog (159 aa).

The protein belongs to the Smg family.

The protein is Protein Smg homolog of Vibrio parahaemolyticus serotype O3:K6 (strain RIMD 2210633).